A 746-amino-acid polypeptide reads, in one-letter code: MNNNTNGEIIIPQEYLEKSECLFKELKELNINFKEVKHGLAATIKDLLEMNLENSTNILKNLFLKDKKKNYFLICTLNNKTVDLKNLSNILKTNNLRFVDENNLNNILNIQPGCLSPLAIKNDKENIVKLYFDEEIKNMQEVIIHPLHNYSSLYIKTQDVIKFCESFNHAPEYVQIKEDTTSKARVDKKEDVQEEMAKNEELQNNNNNNKNNSNSNNNNNNNNNHIKDTILKGKLLSNNEVEDNKSKDSNILGITSKKIENFSDWYTQVIVKSELIEYYDISGCYILRPAAYYIWECVQAFFNKEIKKLNVENSYFPLFVTKNKLEKEKNHIEGFSPEVAWVTKYGDSNLPEEIAIRPTSETIMYSVFPKWIRSYRDLPLKLNQWNTVVRWEFKQPTPFIRTREFLWQEGHTAHKNEEEAVKLVFDILDLYRRWYEEYLAVPIIKGIKSEGEKFGGANFTSTAEAFISENGRAIQAATSHYLGTNFAKMFKIEFEDENEVKQYVHQTSWGCTTRSIGIMIMTHGDDKGLVLPPNVSKYKVVIVPIFYKTTDENAIHSYCKDIEKILKNAQINCVYDDRASYSPGYKFNHWELRGIPIRIEVGPKDLQNNSCVIVRRDNNEKCNVKKESVLLETQQMLVDIHKNLFLKAKKKLDDSIVQVTSFSEVMNALNKKKMVLAPWCEDIATEEEIKKETQRLSLNQTNSETTLSGAMKPLCIPLDQPPMPPNMKCFWSGKPAKRWCLFGRSY.

Residues 1 to 223 are required for editing of incorrectly charged tRNA; it reads MNNNTNGEII…NSNNNNNNNN (223 aa). The span at 181-201 shows a compositional bias: basic and acidic residues; that stretch reads TSKARVDKKEDVQEEMAKNEE. The segment at 181-226 is disordered; sequence TSKARVDKKEDVQEEMAKNEELQNNNNNNKNNSNSNNNNNNNNNHI. A compositionally biased stretch (low complexity) spans 204 to 224; the sequence is NNNNNNKNNSNSNNNNNNNNN. Arginine 390 is an L-proline binding site. ATP contacts are provided by residues 390–394, 401–405, and 475–477; these read RWEFK, RTREF, and QAA. Position 480 (histidine 480) interacts with L-proline. An ATP-binding site is contributed by 512 to 514; that stretch reads TTR.

Belongs to the class-II aminoacyl-tRNA synthetase family. ProS type 3 subfamily. Homodimer.

It localises to the cytoplasm. The enzyme catalyses tRNA(Pro) + L-proline + ATP = L-prolyl-tRNA(Pro) + AMP + diphosphate. With respect to regulation, inhibited by the quinazolinone-based compound febrifugine from the Chinese plant Dichroa febrifuga which is used to treat malaria-associated fever. Also inhibited by febrifugine derivatives such as halofuginone. Functionally, catalyzes the attachment of proline to tRNA(Pro) in a two-step reaction: proline is first activated by ATP to form Pro-AMP and then transferred to the acceptor end of tRNA(Pro). Functions in trans to edit the amino acid moiety from incorrectly charged Ala-tRNA(Pro). Has no activity on correctly charged Pro-tRNA(Pro) or Ala-tRNA(Ala). This chain is Proline--tRNA ligase, found in Plasmodium falciparum (isolate 3D7).